A 242-amino-acid chain; its full sequence is Neuromodulin (242 aa).

The tract at residues 1–242 is disordered; the sequence is MLCCMRRTKQ…EEREADQEHA (242 aa). S-palmitoyl cysteine attachment occurs at residues Cys-3 and Cys-4. Over residues 9–32 the composition is skewed to basic and acidic residues; sequence KQVEKNDEDQKIEQDGIKPEDKAH. Residues 31–60 enclose the IQ domain; sequence AHKAATKIQASFRGHITRKKLKGEKKGDAP. A Phosphoserine; by PHK and PKC modification is found at Ser-41. A compositionally biased stretch (basic and acidic residues) spans 66-84; it reads ANEKDEAAVAEGTEKKEGE. Residues 85 to 97 show a composition bias toward low complexity; that stretch reads GSTPAEAAPGAGP. Position 86 is a phosphoserine (Ser-86). The segment covering 98-118 has biased composition (basic and acidic residues); that stretch reads KPEEKTGKAGETPSEEKKGEG. The span at 119–134 shows a compositional bias: low complexity; that stretch reads APDAATEQAAPQAPAP. Residues 143–158 show a composition bias toward polar residues; it reads ETESATKASTDNSPSS. 3 positions are modified to phosphoserine: Ser-155, Ser-157, and Ser-158. The span at 159–171 shows a compositional bias: basic and acidic residues; the sequence is KAEDAPAKEEPKQ. Residues 172-204 show a composition bias toward low complexity; sequence ADVPAAVTAAAATAPAAEDAAAMATAQPPTETA. Ser-206 and Ser-207 each carry phosphoserine; by CK2. Residues 209 to 242 show a composition bias toward basic and acidic residues; that stretch reads AEEKIEAVDETKPKDSARQDEGKGEEREADQEHA.

This sequence belongs to the neuromodulin family. In terms of assembly, identified in a complex containing FGFR4, NCAM1, CDH2, PLCG1, FRS2, SRC, SHC1, GAP43 and CTTN. Interacts (via IQ domain) with calmodulin. Binds calmodulin with a greater affinity in the absence of Ca(2+) than in its presence. In terms of processing, phosphorylated. Phosphorylation of this protein by a protein kinase C is specifically correlated with certain forms of synaptic plasticity. Palmitoylated by ZDHHC3. Palmitoylation is regulated by ARF6 and is essential for plasma membrane association and axonal and dendritic filopodia induction. Deacylated by LYPLA2.

It localises to the cell membrane. It is found in the cell projection. Its subcellular location is the growth cone membrane. The protein resides in the synapse. The protein localises to the filopodium membrane. It localises to the perikaryon. It is found in the dendrite. Its subcellular location is the axon. The protein resides in the cytoplasm. Functionally, this protein is associated with nerve growth. It is a major component of the motile 'growth cones' that form the tips of elongating axons. Plays a role in axonal and dendritic filopodia induction. This chain is Neuromodulin (GAP43), found in Bos taurus (Bovine).